The primary structure comprises 472 residues: Membrane-bound lytic murein transglycosylase F (472 aa).

The signal sequence occupies residues 1–24; it reads MRLLVIFLLALLLMACKEAPKPLA. The interval 25–259 is non-LT domain; it reads DPRTTKEIIV…HLIDRYYGHA (235 aa). The segment at 260 to 472 is LT domain; it reads DRLKPVDVTT…NGFGNTLSQE (213 aa). The active site involves Glu306.

In the N-terminal section; belongs to the bacterial solute-binding protein 3 family. The protein in the C-terminal section; belongs to the transglycosylase Slt family.

Its subcellular location is the cell outer membrane. It catalyses the reaction Exolytic cleavage of the (1-&gt;4)-beta-glycosidic linkage between N-acetylmuramic acid (MurNAc) and N-acetylglucosamine (GlcNAc) residues in peptidoglycan, from either the reducing or the non-reducing ends of the peptidoglycan chains, with concomitant formation of a 1,6-anhydrobond in the MurNAc residue.. In terms of biological role, murein-degrading enzyme that degrades murein glycan strands and insoluble, high-molecular weight murein sacculi, with the concomitant formation of a 1,6-anhydromuramoyl product. Lytic transglycosylases (LTs) play an integral role in the metabolism of the peptidoglycan (PG) sacculus. Their lytic action creates space within the PG sacculus to allow for its expansion as well as for the insertion of various structures such as secretion systems and flagella. This chain is Membrane-bound lytic murein transglycosylase F, found in Methylobacillus flagellatus (strain ATCC 51484 / DSM 6875 / VKM B-1610 / KT).